We begin with the raw amino-acid sequence, 224 residues long: Dehydration-responsive element-binding protein 1G (224 aa).

The span at 1–16 (MDVSAALSSDYSSGTP) shows a compositional bias: polar residues. The segment at 1-46 (MDVSAALSSDYSSGTPSPVAADADDGSSAYMTVSSAPPKRRAGRTK) is disordered. The segment at residues 54–111 (VFKGVRRRNPGRWVCEVREPHGKQRIWLGTFETAEMAARAHDVAALALRGRAACLNFA) is a DNA-binding region (AP2/ERF).

Belongs to the AP2/ERF transcription factor family. ERF subfamily.

Its subcellular location is the nucleus. Functionally, transcriptional activator that binds specifically to the DNA sequence 5'-[AG]CCGAC-3'. Binding to the C-repeat/DRE element mediates high salinity- and dehydration-inducible transcription. In Oryza sativa subsp. indica (Rice), this protein is Dehydration-responsive element-binding protein 1G (DREB1G).